Reading from the N-terminus, the 408-residue chain is D-galactonate dehydratase family member OG2516_05608 (408 aa).

Asp-215 is a Mg(2+) binding site. Residue His-217 coordinates D-arabinonate. The Mg(2+) site is built by Glu-241 and Glu-267. D-arabinonate-binding residues include Glu-267, Arg-288, His-317, and Glu-344.

Belongs to the mandelate racemase/muconate lactonizing enzyme family. GalD subfamily.

Functionally, has no detectable activity with D-mannonate and with a panel of 70 other acid sugars (in vitro), in spite of the conservation of the residues that are expected to be important for catalytic activity and cofactor binding. May have evolved a divergent function. The protein is D-galactonate dehydratase family member OG2516_05608 of Oceanicola granulosus (strain ATCC BAA-861 / DSM 15982 / KCTC 12143 / HTCC2516).